The chain runs to 920 residues: Disintegrin and metalloproteinase domain-containing protein 19 (920 aa).

The signal sequence occupies residues 1-26 (MPGRAGVARFCLLALALQLHWPLAAC). The propeptide occupies 27 to 204 (EPGWTTRGSQ…TKKQPRRMKR (178 aa)). Residues 27–703 (EPGWTTRGSQ…VDSGPLPPKS (677 aa)) are Extracellular-facing. A Cysteine switch motif is present at residues 131-138 (STCRGIRG). Cysteine 133 is a binding site for Zn(2+). Residue asparagine 145 is glycosylated (N-linked (GlcNAc...) asparagine). A Peptidase M12B domain is found at 211–409 (KYVELYLVAD…GGGMCLSNMP (199 aa)). Intrachain disulfides connect cysteine 321-cysteine 404, cysteine 361-cysteine 388, and cysteine 362-cysteine 371. Zn(2+) is bound at residue histidine 346. The active site involves glutamate 347. Zn(2+) contacts are provided by histidine 350 and histidine 356. Residues 417 to 503 (GRRCGNGYLE…HCPTNYYQMD (87 aa)) enclose the Disintegrin domain. Residues asparagine 445 and asparagine 448 are each glycosylated (N-linked (GlcNAc...) asparagine). A disulfide bond links cysteine 475 and cysteine 495. A glycan (N-linked (GlcNAc...) asparagine) is linked at asparagine 649. The 33-residue stretch at 654 to 686 (ETEGCGKKCNGHGVCNNNKNCHCFPGWSPPFCN) folds into the EGF-like domain. 3 disulfides stabilise this stretch: cysteine 658/cysteine 668, cysteine 662/cysteine 674, and cysteine 676/cysteine 685. A helical membrane pass occupies residues 704-724 (VGPVIAGVFSALFVLAVLVLL). At 725–920 (CHCYRQSHKL…RVGAIISSKI (196 aa)) the chain is on the cytoplasmic side. Positions 755–920 (SQSGGTGHAN…RVGAIISSKI (166 aa)) are disordered. Residues 767-783 (FKLQTPQGKRKVTNTPE) show a composition bias toward polar residues. Positions 825–834 (ARIERKESAR) are enriched in basic and acidic residues. The SH3-binding signature appears at 835 to 846 (RPPPSRPMPPAP). Pro residues-rich tracts occupy residues 835–846 (RPPPSRPMPPAP) and 888–903 (TSGPQPPRPPAVPVPK).

Interacts with SH3PXD2A. Zn(2+) is required as a cofactor. Post-translationally, the precursor is cleaved by a furin endopeptidase. Widely expressed, with the highest expression in bone, heart and lung, followed by brain and spleen and relatively low expression in liver, skeletal muscle, kidney and testis. In bone, primarily expressed in cell of the osteoblast lineage and not detected in mature osteoclasts.

Its subcellular location is the membrane. In terms of biological role, participates in the proteolytic processing of beta-type neuregulin isoforms which are involved in neurogenesis and synaptogenesis, suggesting a regulatory role in glial cell. Also cleaves alpha-2 macroglobulin. May be involved in osteoblast differentiation and/or osteoblast activity in bone. The polypeptide is Disintegrin and metalloproteinase domain-containing protein 19 (Adam19) (Mus musculus (Mouse)).